The following is a 1604-amino-acid chain: Metabotropic glutamate receptor-like protein R (1604 aa).

Positions 1 to 27 are cleaved as a signal peptide; the sequence is MVIKKPFIFIFICFLICLLICIDLTNC. The Extracellular portion of the chain corresponds to 28–1149; that stretch reads NTINNNNNNN…TDVSKTKIAK (1122 aa). A compositionally biased stretch (low complexity) spans 38 to 69; that stretch reads NNNNNNNNNNNNNNNNNNNNNNNNNNNNNNDN. The disordered stretch occupies residues 38–72; the sequence is NNNNNNNNNNNNNNNNNNNNNNNNNNNNNNDNNEN. Residues 98–133 are a coiled coil; sequence DFYINKIKKEIKDREKYKNNIENEILKINSQKKRKK. Residues 213–263 are disordered; that stretch reads NNNNNNNNNNNNNNNNNNKNNNNNNNNKNNNNNNNNKNNNNNNNNKNNNKN. N285, N327, N359, N375, N489, N498, N525, N577, N593, N624, N768, N837, N841, N851, N864, N876, N885, N888, N913, N967, N991, N1097, and N1109 each carry an N-linked (GlcNAc...) asparagine glycan. The helical transmembrane segment at 1150-1170 threads the bilayer; sequence IIIGISAIIVSIGVLITAILT. Residues 1171-1184 are Cytoplasmic-facing; it reads FIYRKRKIMRYSNP. The chain crosses the membrane as a helical span at residues 1185-1205; the sequence is VFLLIILVGCVCGLVSTFVSF. The Extracellular segment spans residues 1206–1211; that stretch reads STTSAT. Residues 1212 to 1232 traverse the membrane as a helical segment; that stretch reads CSIRMVLIPLFFFIITSAIFI. At 1233-1256 the chain is on the cytoplasmic side; sequence KQYRVYCLIRGVEELHDMSIENSY. The chain crosses the membrane as a helical span at residues 1257–1277; sequence LLKLQSFILIIPAILIAVSVI. Residues 1278–1304 lie on the Extracellular side of the membrane; it reads ATRMHRKYNFDLQKETIQAYCYSKNFY. The helical transmembrane segment at 1305–1325 threads the bilayer; the sequence is IIFICLALYEFSILLYGCWIV. The Cytoplasmic portion of the chain corresponds to 1326–1340; that stretch reads IKCRQYRSFPGSFNE. A helical transmembrane segment spans residues 1341-1361; that stretch reads FFYIGVLIYVLTVILVVSIPI. The Extracellular segment spans residues 1362–1372; the sequence is GFALLNSALTD. A helical transmembrane segment spans residues 1373 to 1393; it reads FLLYSIPILVLIVAIIGLLFA. Topologically, residues 1394 to 1604 are cytoplasmic; that stretch reads PKFYFLFRTD…KSSQNSPLLD (211 aa). The disordered stretch occupies residues 1457–1604; the sequence is TGSNTSDDVS…KSSQNSPLLD (148 aa). Composition is skewed to low complexity over residues 1471–1527 and 1534–1556; these read FDSP…NKNN and SSSN…GRSS. The segment covering 1563–1572 has biased composition (basic residues); it reads NNKKNRRKNS. Residues 1573-1584 show a composition bias toward polar residues; it reads LRTPILNSLLSP.

The protein belongs to the G-protein coupled receptor 3 family. GABA-B receptor subfamily.

The protein localises to the membrane. In Dictyostelium discoideum (Social amoeba), this protein is Metabotropic glutamate receptor-like protein R (grlR).